The primary structure comprises 459 residues: MPQLNGGGGDDLGANDELISFKDEGEQEEKNSENSSAERDLADVKSSLVNESETNQDSSSDSEAERRPPPRSESFRDKSRESLEEAAKRQDGGLFKGPPYPGYPFIMIPDLTSPYLPNGSLSPTARTYLQMKWPLLDVQAGSLQSRQTLKDARSPSPAHIVSNKVPVVQHPHHVHPLTPLITYSNEHFTPGNPPPHLPADVDPKTGIPRPPHPPDISPYYPLSPGTVGQIPHPLGWLVPQQGQPVYPITTGGFRHPYPTALTVNASMSRFPPHMVPPHHTLHTTGIPHPAIVTPTVKQESSQSDVGSLHSSKHQDSKKEEEKKKPHIKKPLNAFMLYMKEMRAKVVAECTLKESAAINQILGRRWHALSREEQAKYYELARKERQLHMQLYPGWSARDNYGKKKKRKRDKQPGETNEHSECFLNPCLSLPPITDLSAPKKCRARFGLDQQNNWCGPCSL.

The span at 1–11 (MPQLNGGGGDD) shows a compositional bias: gly residues. The segment at 1–53 (MPQLNGGGGDDLGANDELISFKDEGEQEEKNSENSSAERDLADVKSSLVNESE) is CTNNB1-binding. A disordered region spans residues 1 to 96 (MPQLNGGGGD…AKRQDGGLFK (96 aa)). Residues 19–43 (ISFKDEGEQEEKNSENSSAERDLAD) are compositionally biased toward basic and acidic residues. Lysine 22 is covalently cross-linked (Glycyl lysine isopeptide (Lys-Gly) (interchain with G-Cter in SUMO2)). Residues 47–56 (SLVNESETNQ) are compositionally biased toward polar residues. Basic and acidic residues predominate over residues 63–91 (EAERRPPPRSESFRDKSRESLEEAAKRQD). Residues threonine 178 and threonine 189 each carry the phosphothreonine; by NLK modification. The mediates interaction with MAD2L2 stretch occupies residues 178-372 (TPLITYSNEH…RRWHALSREE (195 aa)). The segment covering 295 to 305 (TVKQESSQSDV) has biased composition (polar residues). Disordered regions lie at residues 295 to 327 (TVKQ…KPHI) and 397 to 418 (RDNY…TNEH). Lysine 297 participates in a covalent cross-link: Glycyl lysine isopeptide (Lys-Gly) (interchain with G-Cter in SUMO). Residues 312–323 (KHQDSKKEEEKK) are compositionally biased toward basic and acidic residues. The HMG box DNA-binding region spans 327-395 (IKKPLNAFML…LHMQLYPGWS (69 aa)). Residues 402–408 (KKKKRKR) carry the Nuclear localization signal motif.

The protein belongs to the TCF/LEF family. In terms of assembly, interacts with TGFB1I1. Interacts with SPIN1. Interacts with CTNNB1 (via the armadillo repeat); forms stable transcription complex. Interacts with EP300. Interacts with NLK. Interacts with CCDC85B (probably through the HMG box); prevents interaction with CTNNB1. Interacts with TNIK. Interacts with MAD2L2; prevents TCF7L2/TCF4 binding to promZIPK/DAPK3oters, negatively modulating its transcriptional activity. Interacts with ZIPK/DAPK3. Interacts with XIAP/BIRC4 and TLE3. Interacts with DDIT3/CHOP. The CTNNB1 and TCF7L2/TCF4 complex interacts with PML (isoform PML-4). Identified in a complex with CTNNB1 and FERMT2. Interacts with C11orf84/SPINDOC in a SPIN1-dependent manner. Interacts with DAZAP2; the interaction results in localization of DAZAP2 to the nucleus. Post-translationally, phosphorylated at Thr-178 and/or Thr-189 by NLK. Phosphorylation by NLK at these sites inhibits DNA-binding by TCF7L2/TCF4, thereby preventing transcriptional activation of target genes of the canonical Wnt/beta-catenin signaling pathway. Polysumoylated. Sumoylation is enhanced by PIAS family members and desumoylation is enhanced by SENP2. Sumoylation/desumoylation regulates TCF7L2/TCF4 transcription activity in the Wnt/beta-catenin signaling pathway without altering interaction with CTNNB1 nor binding to DNA. In terms of tissue distribution, detected in adult brain and liver, and at lower levels in intestine, with a clear increase from the distal colon to the duodenum. Detected at low levels in heart, lung, kidney, pituitary and testis.

It localises to the nucleus. It is found in the PML body. Participates in the Wnt signaling pathway and modulates MYC expression by binding to its promoter in a sequence-specific manner. Acts as a repressor in the absence of CTNNB1, and as activator in its presence. Activates transcription from promoters with several copies of the Tcf motif CCTTTGATC in the presence of CTNNB1. TLE1, TLE2, TLE3 and TLE4 repress transactivation mediated by TCF7L2/TCF4 and CTNNB1. Expression of dominant-negative mutants results in cell-cycle arrest in G1. Necessary for the maintenance of the epithelial stem-cell compartment of the small intestine. This is Transcription factor 7-like 2 (Tcf7l2) from Mus musculus (Mouse).